Consider the following 153-residue polypeptide: Pheromone-binding protein Gp-9 (153 aa).

The N-terminal stretch at 1–19 (MKTFVLHIFIFALVAFASA) is a signal peptide. Disulfide bonds link Cys-37–Cys-77, Cys-73–Cys-129, and Cys-118–Cys-138.

Belongs to the PBP/GOBP family. In terms of assembly, homodimer.

It is found in the secreted. Colony queen number, a major feature of social organization, is associated with worker genotype for Gp-9. Colonies are headed by either a single reproductive queen (monogyne form) or multiple queens (polygyne form). Differences in worker Gp-9 genotypes between social forms may cause differences in workers' abilities to recognize queens and regulate their numbers. The sequence is that of Pheromone-binding protein Gp-9 from Solenopsis n. sp. (strain JP-2002) (Fire ant).